The primary structure comprises 363 residues: 3-dehydroquinate synthase (363 aa).

Residues 107 to 111, 131 to 132, K144, and K153 each bind NAD(+); these read GVIGD and TT. Zn(2+) is bound by residues E186, H251, and H268.

This sequence belongs to the sugar phosphate cyclases superfamily. Dehydroquinate synthase family. Co(2+) is required as a cofactor. The cofactor is Zn(2+). NAD(+) serves as cofactor.

It is found in the cytoplasm. The enzyme catalyses 7-phospho-2-dehydro-3-deoxy-D-arabino-heptonate = 3-dehydroquinate + phosphate. It functions in the pathway metabolic intermediate biosynthesis; chorismate biosynthesis; chorismate from D-erythrose 4-phosphate and phosphoenolpyruvate: step 2/7. Its function is as follows. Catalyzes the conversion of 3-deoxy-D-arabino-heptulosonate 7-phosphate (DAHP) to dehydroquinate (DHQ). The chain is 3-dehydroquinate synthase from Nostoc punctiforme (strain ATCC 29133 / PCC 73102).